A 322-amino-acid polypeptide reads, in one-letter code: tRNA-dihydrouridine synthase B (322 aa).

Residues 16–18 (PMA) and glutamine 70 each bind FMN. Cysteine 100 functions as the Proton donor in the catalytic mechanism. Residues lysine 139, 200 to 202 (NGD), and 224 to 225 (GR) each bind FMN.

This sequence belongs to the Dus family. DusB subfamily. FMN serves as cofactor.

It carries out the reaction a 5,6-dihydrouridine in tRNA + NAD(+) = a uridine in tRNA + NADH + H(+). The enzyme catalyses a 5,6-dihydrouridine in tRNA + NADP(+) = a uridine in tRNA + NADPH + H(+). Catalyzes the synthesis of 5,6-dihydrouridine (D), a modified base found in the D-loop of most tRNAs, via the reduction of the C5-C6 double bond in target uridines. The polypeptide is tRNA-dihydrouridine synthase B (Shewanella oneidensis (strain ATCC 700550 / JCM 31522 / CIP 106686 / LMG 19005 / NCIMB 14063 / MR-1)).